The primary structure comprises 224 residues: Thiamine-phosphate synthase (224 aa).

4-amino-2-methyl-5-(diphosphooxymethyl)pyrimidine is bound by residues 41 to 45 and aspartate 77; that span reads QFRDK. The Mg(2+) site is built by aspartate 78 and aspartate 97. Serine 116 contributes to the 4-amino-2-methyl-5-(diphosphooxymethyl)pyrimidine binding site. Residue 143–145 participates in 2-[(2R,5Z)-2-carboxy-4-methylthiazol-5(2H)-ylidene]ethyl phosphate binding; that stretch reads TNS. Lysine 146 contacts 4-amino-2-methyl-5-(diphosphooxymethyl)pyrimidine. Residues glycine 174 and 194-195 each bind 2-[(2R,5Z)-2-carboxy-4-methylthiazol-5(2H)-ylidene]ethyl phosphate; that span reads IS.

This sequence belongs to the thiamine-phosphate synthase family. The cofactor is Mg(2+).

The enzyme catalyses 2-[(2R,5Z)-2-carboxy-4-methylthiazol-5(2H)-ylidene]ethyl phosphate + 4-amino-2-methyl-5-(diphosphooxymethyl)pyrimidine + 2 H(+) = thiamine phosphate + CO2 + diphosphate. It carries out the reaction 2-(2-carboxy-4-methylthiazol-5-yl)ethyl phosphate + 4-amino-2-methyl-5-(diphosphooxymethyl)pyrimidine + 2 H(+) = thiamine phosphate + CO2 + diphosphate. It catalyses the reaction 4-methyl-5-(2-phosphooxyethyl)-thiazole + 4-amino-2-methyl-5-(diphosphooxymethyl)pyrimidine + H(+) = thiamine phosphate + diphosphate. It participates in cofactor biosynthesis; thiamine diphosphate biosynthesis; thiamine phosphate from 4-amino-2-methyl-5-diphosphomethylpyrimidine and 4-methyl-5-(2-phosphoethyl)-thiazole: step 1/1. In terms of biological role, condenses 4-methyl-5-(beta-hydroxyethyl)thiazole monophosphate (THZ-P) and 2-methyl-4-amino-5-hydroxymethyl pyrimidine pyrophosphate (HMP-PP) to form thiamine monophosphate (TMP). This chain is Thiamine-phosphate synthase, found in Latilactobacillus sakei subsp. sakei (strain 23K) (Lactobacillus sakei subsp. sakei).